The following is a 179-amino-acid chain: ATP synthase subunit delta (179 aa).

This sequence belongs to the ATPase delta chain family. In terms of assembly, F-type ATPases have 2 components, F(1) - the catalytic core - and F(0) - the membrane proton channel. F(1) has five subunits: alpha(3), beta(3), gamma(1), delta(1), epsilon(1). F(0) has three main subunits: a(1), b(2) and c(10-14). The alpha and beta chains form an alternating ring which encloses part of the gamma chain. F(1) is attached to F(0) by a central stalk formed by the gamma and epsilon chains, while a peripheral stalk is formed by the delta and b chains.

The protein localises to the cell inner membrane. F(1)F(0) ATP synthase produces ATP from ADP in the presence of a proton or sodium gradient. F-type ATPases consist of two structural domains, F(1) containing the extramembraneous catalytic core and F(0) containing the membrane proton channel, linked together by a central stalk and a peripheral stalk. During catalysis, ATP synthesis in the catalytic domain of F(1) is coupled via a rotary mechanism of the central stalk subunits to proton translocation. Functionally, this protein is part of the stalk that links CF(0) to CF(1). It either transmits conformational changes from CF(0) to CF(1) or is implicated in proton conduction. The chain is ATP synthase subunit delta from Maricaulis maris (strain MCS10) (Caulobacter maris).